The primary structure comprises 179 residues: Endoribonuclease YbeY (179 aa).

Zn(2+) is bound by residues H141, H145, and H151.

The protein belongs to the endoribonuclease YbeY family. The cofactor is Zn(2+).

It localises to the cytoplasm. Single strand-specific metallo-endoribonuclease involved in late-stage 70S ribosome quality control and in maturation of the 3' terminus of the 16S rRNA. The polypeptide is Endoribonuclease YbeY (Synechocystis sp. (strain ATCC 27184 / PCC 6803 / Kazusa)).